We begin with the raw amino-acid sequence, 400 residues long: Na(+)/H(+) antiporter NhaA (400 aa).

A run of 11 helical transmembrane segments spans residues 10–30 (FNLEASGGIVLALAAIAAMII), 60–80 (AHHWINDGLMAVFFFLVGLEL), 95–115 (IILPAGAALGGMVMPAIVYLF), 126–146 (GWAIPTATDIAFALGILSLLG), 155–175 (VFLVSIAIFDDIGAIIIIALF), 178–198 (NDLSLGSLAIAGLCLPFLYML), 218–238 (IAVLKSGIHATLAGVVLALFI), 265–285 (GILPLFAFANAGISLKGAGFG), 295–315 (IAAGLFIGKQVGVMLMCWLIF), 334–354 (AALLCGVGFTMSLFIGGLAFA), and 364–384 (LGIIMGSIVSGIAGYMMLKTT).

It belongs to the NhaA Na(+)/H(+) (TC 2.A.33) antiporter family.

Its subcellular location is the cell inner membrane. It carries out the reaction Na(+)(in) + 2 H(+)(out) = Na(+)(out) + 2 H(+)(in). Na(+)/H(+) antiporter that extrudes sodium in exchange for external protons. This chain is Na(+)/H(+) antiporter NhaA, found in Psychrobacter arcticus (strain DSM 17307 / VKM B-2377 / 273-4).